The following is a 157-amino-acid chain: Ribosome maturation factor RimP (157 aa).

This sequence belongs to the RimP family.

The protein localises to the cytoplasm. Functionally, required for maturation of 30S ribosomal subunits. In Limosilactobacillus reuteri (strain DSM 20016) (Lactobacillus reuteri), this protein is Ribosome maturation factor RimP.